Consider the following 405-residue polypeptide: MDHLPMPKFGPLAGLRVVFSGIEIAGPFAGQMFAEWGAEVIWIENVAWADTIRVQPNYPQLSRRNLHALSLNIFKDEGREAFLKLMETTDIFIEASKGPAFARRGITDEVLWQHNPKLVIAHLSGFGQYGTEEYTNLPAYNTIAQAFSGYLIQNGDVDQPMPAFPYTADYFSGLTATTAALAALHKARETGKGESIDIAMYEVMLRMGQYFMMDYFNGGEMCPRMSKGKDPYYAGCGLYKCADGYIVMELVGITQIEECFKDIGLAHLLGTPEIPEGTQLIHRIECPYGPLVEEKLDAWLAAHTIAEVKERFAELNIACAKVLTVPELESNPQYVARESITQWQTMDGRTCKGPNIMPKFKNNPGQIWRGMPSHGMDTAAILKNIGYSENDIQELVSKGLAKVED.

Lys97 and Arg104 together coordinate CoA. The active-site Nucleophile is Asp169.

Belongs to the CoA-transferase III family. CaiB subfamily. In terms of assembly, homodimer.

The protein localises to the cytoplasm. It carries out the reaction crotonobetainyl-CoA + (R)-carnitine = crotonobetaine + (R)-carnitinyl-CoA. The catalysed reaction is 4-(trimethylamino)butanoyl-CoA + (R)-carnitine = (R)-carnitinyl-CoA + 4-(trimethylamino)butanoate. Its pathway is amine and polyamine metabolism; carnitine metabolism. In terms of biological role, catalyzes the reversible transfer of the CoA moiety from gamma-butyrobetainyl-CoA to L-carnitine to generate L-carnitinyl-CoA and gamma-butyrobetaine. Is also able to catalyze the reversible transfer of the CoA moiety from gamma-butyrobetainyl-CoA or L-carnitinyl-CoA to crotonobetaine to generate crotonobetainyl-CoA. The polypeptide is L-carnitine CoA-transferase (caiB) (Escherichia coli O157:H7).